We begin with the raw amino-acid sequence, 56 residues long: MAVQQNKKSRSRRDMRRSHDALTTAAVSVDKTTGETHLRHHVTADGYYCGRKVINK.

The tract at residues 1–27 (MAVQQNKKSRSRRDMRRSHDALTTAAV) is disordered. Over residues 7–16 (KKSRSRRDMR) the composition is skewed to basic residues.

The protein belongs to the bacterial ribosomal protein bL32 family.

The protein is Large ribosomal subunit protein bL32 of Actinobacillus pleuropneumoniae serotype 7 (strain AP76).